We begin with the raw amino-acid sequence, 239 residues long: Probable transcriptional regulatory protein Aave_3203 (239 aa).

The interval 1–20 is disordered; that stretch reads MAGHSKWANIQHRKGRQDEK.

Belongs to the TACO1 family.

Its subcellular location is the cytoplasm. The protein is Probable transcriptional regulatory protein Aave_3203 of Paracidovorax citrulli (strain AAC00-1) (Acidovorax citrulli).